We begin with the raw amino-acid sequence, 486 residues long: Malonate-semialdehyde dehydrogenase 1 (486 aa).

Residues phenylalanine 154, lysine 178, glutamate 181, arginine 182, and serine 231 each contribute to the NAD(+) site. Cysteine 286 acts as the Nucleophile in catalysis. Position 386 (glutamate 386) interacts with NAD(+).

The protein belongs to the aldehyde dehydrogenase family. IolA subfamily. As to quaternary structure, homotetramer.

The catalysed reaction is 3-oxopropanoate + NAD(+) + CoA + H2O = hydrogencarbonate + acetyl-CoA + NADH + H(+). The enzyme catalyses 2-methyl-3-oxopropanoate + NAD(+) + CoA + H2O = propanoyl-CoA + hydrogencarbonate + NADH + H(+). Its pathway is polyol metabolism; myo-inositol degradation into acetyl-CoA; acetyl-CoA from myo-inositol: step 7/7. Functionally, catalyzes the oxidation of malonate semialdehyde (MSA) and methylmalonate semialdehyde (MMSA) into acetyl-CoA and propanoyl-CoA, respectively. Is involved in a myo-inositol catabolic pathway. Bicarbonate, and not CO2, is the end-product of the enzymatic reaction. The polypeptide is Malonate-semialdehyde dehydrogenase 1 (Bacillus anthracis).